The following is a 370-amino-acid chain: 2-aminoethylphosphonate--pyruvate transaminase 2 (370 aa).

Residue Lys194 is modified to N6-(pyridoxal phosphate)lysine.

This sequence belongs to the class-V pyridoxal-phosphate-dependent aminotransferase family. PhnW subfamily. Homodimer. Pyridoxal 5'-phosphate serves as cofactor.

The enzyme catalyses (2-aminoethyl)phosphonate + pyruvate = phosphonoacetaldehyde + L-alanine. Its function is as follows. Involved in phosphonate degradation. The chain is 2-aminoethylphosphonate--pyruvate transaminase 2 from Paraburkholderia xenovorans (strain LB400).